The following is a 276-amino-acid chain: NH(3)-dependent NAD(+) synthetase (276 aa).

ATP is bound at residue 46–53; it reads GISGGQDS. Position 52 (D52) interacts with Mg(2+). R141 is a deamido-NAD(+) binding site. T161 is an ATP binding site. E166 provides a ligand contact to Mg(2+). K174 and D181 together coordinate deamido-NAD(+). ATP contacts are provided by K190 and T212. 261-262 contributes to the deamido-NAD(+) binding site; the sequence is HK.

Belongs to the NAD synthetase family. As to quaternary structure, homodimer.

It catalyses the reaction deamido-NAD(+) + NH4(+) + ATP = AMP + diphosphate + NAD(+) + H(+). The protein operates within cofactor biosynthesis; NAD(+) biosynthesis; NAD(+) from deamido-NAD(+) (ammonia route): step 1/1. Catalyzes the ATP-dependent amidation of deamido-NAD to form NAD. Uses ammonia as a nitrogen source. This is NH(3)-dependent NAD(+) synthetase from Limosilactobacillus fermentum (strain NBRC 3956 / LMG 18251) (Lactobacillus fermentum).